The chain runs to 487 residues: Photosystem II CP43 reaction center protein (487 aa).

The propeptide occupies 1–28 (MKVFVLGWLLKINLMKTLYSQRRFYHVE). 5 consecutive transmembrane segments (helical) span residues 83–107 (LFEV…PHLA), 148–169 (LIGP…RDKN), 192–214 (KSLF…RFVS), 269–289 (KPFA…LSYS), and 305–326 (WYNN…ASQA). Glu-381 contributes to the [CaMn4O5] cluster binding site. A helical transmembrane segment spans residues 461-485 (RARAAAAGFEKGINRENEPVLSMRP).

It belongs to the PsbB/PsbC family. PsbC subfamily. In terms of assembly, PSII is composed of 1 copy each of membrane proteins PsbA, PsbB, PsbC, PsbD, PsbE, PsbF, PsbH, PsbI, PsbJ, PsbK, PsbL, PsbM, PsbT, PsbX, PsbY, PsbZ, Psb30/Ycf12, at least 3 peripheral proteins of the oxygen-evolving complex and a large number of cofactors. It forms dimeric complexes. Requires Binds multiple chlorophylls and provides some of the ligands for the Ca-4Mn-5O cluster of the oxygen-evolving complex. It may also provide a ligand for a Cl- that is required for oxygen evolution. PSII binds additional chlorophylls, carotenoids and specific lipids. as cofactor.

The protein localises to the plastid. Its subcellular location is the chloroplast thylakoid membrane. In terms of biological role, one of the components of the core complex of photosystem II (PSII). It binds chlorophyll and helps catalyze the primary light-induced photochemical processes of PSII. PSII is a light-driven water:plastoquinone oxidoreductase, using light energy to abstract electrons from H(2)O, generating O(2) and a proton gradient subsequently used for ATP formation. This Porphyra purpurea (Red seaweed) protein is Photosystem II CP43 reaction center protein.